We begin with the raw amino-acid sequence, 200 residues long: Glycerol-3-phosphate acyltransferase (200 aa).

5 helical membrane passes run Tyr-3–Ala-23, Phe-50–Val-70, Ile-75–Leu-95, Val-109–Val-129, and Tyr-134–Gly-154.

This sequence belongs to the PlsY family. As to quaternary structure, probably interacts with PlsX.

Its subcellular location is the cell inner membrane. It carries out the reaction an acyl phosphate + sn-glycerol 3-phosphate = a 1-acyl-sn-glycero-3-phosphate + phosphate. The protein operates within lipid metabolism; phospholipid metabolism. In terms of biological role, catalyzes the transfer of an acyl group from acyl-phosphate (acyl-PO(4)) to glycerol-3-phosphate (G3P) to form lysophosphatidic acid (LPA). This enzyme utilizes acyl-phosphate as fatty acyl donor, but not acyl-CoA or acyl-ACP. This is Glycerol-3-phosphate acyltransferase from Thermosipho melanesiensis (strain DSM 12029 / CIP 104789 / BI429).